A 382-amino-acid polypeptide reads, in one-letter code: Dual-specificity RNA methyltransferase RlmN (382 aa).

Glu-94 acts as the Proton acceptor in catalysis. The region spanning 100–336 (EANRGTLCVS…NTITRKTRGD (237 aa)) is the Radical SAM core domain. An intrachain disulfide couples Cys-107 to Cys-342. Residues Cys-114, Cys-118, and Cys-121 each contribute to the [4Fe-4S] cluster site. S-adenosyl-L-methionine contacts are provided by residues 168–169 (GE), Ser-200, 222–224 (SLH), and Asn-299. Cys-342 serves as the catalytic S-methylcysteine intermediate.

This sequence belongs to the radical SAM superfamily. RlmN family. Requires [4Fe-4S] cluster as cofactor.

The protein localises to the cytoplasm. The enzyme catalyses adenosine(2503) in 23S rRNA + 2 reduced [2Fe-2S]-[ferredoxin] + 2 S-adenosyl-L-methionine = 2-methyladenosine(2503) in 23S rRNA + 5'-deoxyadenosine + L-methionine + 2 oxidized [2Fe-2S]-[ferredoxin] + S-adenosyl-L-homocysteine. It carries out the reaction adenosine(37) in tRNA + 2 reduced [2Fe-2S]-[ferredoxin] + 2 S-adenosyl-L-methionine = 2-methyladenosine(37) in tRNA + 5'-deoxyadenosine + L-methionine + 2 oxidized [2Fe-2S]-[ferredoxin] + S-adenosyl-L-homocysteine. Its function is as follows. Specifically methylates position 2 of adenine 2503 in 23S rRNA and position 2 of adenine 37 in tRNAs. m2A2503 modification seems to play a crucial role in the proofreading step occurring at the peptidyl transferase center and thus would serve to optimize ribosomal fidelity. In Legionella pneumophila subsp. pneumophila (strain Philadelphia 1 / ATCC 33152 / DSM 7513), this protein is Dual-specificity RNA methyltransferase RlmN.